Reading from the N-terminus, the 314-residue chain is Probable 2-(5''-triphosphoribosyl)-3'-dephosphocoenzyme-A synthase (314 aa).

This sequence belongs to the CitG/MdcB family.

The catalysed reaction is 3'-dephospho-CoA + ATP = 2'-(5''-triphospho-alpha-D-ribosyl)-3'-dephospho-CoA + adenine. The sequence is that of Probable 2-(5''-triphosphoribosyl)-3'-dephosphocoenzyme-A synthase from Photobacterium profundum (strain SS9).